We begin with the raw amino-acid sequence, 1037 residues long: Probable serine/threonine-protein kinase KCC4 (1037 aa).

The region spanning 21–285 (WKLGETLGFG…IRDILSHPLL (265 aa)) is the Protein kinase domain. Residues 27 to 35 (LGFGSTGKV) and Lys50 contribute to the ATP site. Asp152 serves as the catalytic Proton acceptor. The span at 372–387 (NKKNRNKIKKTKKNKR) shows a compositional bias: basic residues. The disordered stretch occupies residues 372–494 (NKKNRNKIKK…MPNTKRSSLT (123 aa)). The span at 388–404 (SSTLSSSSSLLLNNRSI) shows a compositional bias: low complexity. The residue at position 396 (Ser396) is a Phosphoserine. Positions 408 to 427 (PRRRTSKRHSREFSSSRKRS) are enriched in basic residues. Residues 453–465 (NVASANTQATPSG) show a composition bias toward polar residues. Over residues 469-480 (PHKRNSKKRSSK) the composition is skewed to basic residues. Positions 481 to 494 (RLSYMPNTKRSSLT) are enriched in low complexity. 6 positions are modified to phosphoserine: Ser675, Ser707, Ser777, Ser822, Ser825, and Ser871. Disordered regions lie at residues 746–804 (LIKE…DFPQ), 810–829 (QEYDMKDKNPNQSPISKSAE), and 861–918 (TLPS…TVKK). Positions 861-873 (TLPSLTSNNSSVG) are enriched in polar residues. Positions 879-888 (GAEKGTESEK) are enriched in basic and acidic residues.

The protein belongs to the protein kinase superfamily. CAMK Ser/Thr protein kinase family. NIM1 subfamily. In terms of assembly, interacts with septin proteins, primarily with CDC11. Interacts with SWE1 and NAP1.

The protein resides in the bud neck. It carries out the reaction L-seryl-[protein] + ATP = O-phospho-L-seryl-[protein] + ADP + H(+). The enzyme catalyses L-threonyl-[protein] + ATP = O-phospho-L-threonyl-[protein] + ADP + H(+). Involved in regulation of bud growth during cell cycle and in septin organization. Plays a role in cell wall synthesis. The chain is Probable serine/threonine-protein kinase KCC4 (KCC4) from Saccharomyces cerevisiae (strain ATCC 204508 / S288c) (Baker's yeast).